Here is a 388-residue protein sequence, read N- to C-terminus: S-adenosylmethionine synthase (388 aa).

Residue histidine 17 coordinates ATP. Mg(2+) is bound at residue aspartate 19. Glutamate 45 is a K(+) binding site. Glutamate 58 and glutamine 101 together coordinate L-methionine. The flexible loop stretch occupies residues 101–111; the sequence is QSPDIGQGVDT. Residues 160 to 162, 226 to 227, aspartate 235, 241 to 242, alanine 258, and lysine 262 contribute to the ATP site; these read DGK, RF, and RK. Aspartate 235 contacts L-methionine. Lysine 266 contacts L-methionine.

Belongs to the AdoMet synthase family. As to quaternary structure, homotetramer; dimer of dimers. Requires Mg(2+) as cofactor. The cofactor is K(+).

The protein resides in the cytoplasm. It catalyses the reaction L-methionine + ATP + H2O = S-adenosyl-L-methionine + phosphate + diphosphate. It participates in amino-acid biosynthesis; S-adenosyl-L-methionine biosynthesis; S-adenosyl-L-methionine from L-methionine: step 1/1. In terms of biological role, catalyzes the formation of S-adenosylmethionine (AdoMet) from methionine and ATP. The overall synthetic reaction is composed of two sequential steps, AdoMet formation and the subsequent tripolyphosphate hydrolysis which occurs prior to release of AdoMet from the enzyme. The chain is S-adenosylmethionine synthase from Anaeromyxobacter sp. (strain K).